A 294-amino-acid polypeptide reads, in one-letter code: MARLLITGAGGQLGRSLAKLLVDNGRYEVLALDFSELDITNKDMVFSIIDSFKPNVIINAAAYTSVDQAELEVSSAYSVNVRGVQYLAEAAIRHNSAILHVSTDYVFDGYKSGKYKETDIIHPLCVYGKSKAEGERLLLTLSPKSIILRTSWTFGEYGNNFVKTMLRLAKNRDILGVVADQIGGPTYSGDIASVLIQIAEKIIVGETVKYGIYHFTGEPCVSWYDFAIAIFDEAVAQKVLENVPLVNAITTADYPTLAKRPANSCLDLTKIQQAFGIQPSDWQRALKNIRAYAE.

Residues 11–13 (GQL), 38–39 (DI), and 62–64 (AYT) contribute to the NADH site. Residues 12–13 (QL), 38–39 (DI), and 62–64 (AYT) contribute to the NADPH site. 103 to 104 (TD) is a binding site for dTDP-beta-L-rhamnose. The NADH site is built by tyrosine 127 and lysine 131. Residues tyrosine 127 and lysine 131 each coordinate NADPH. Catalysis depends on tyrosine 127, which acts as the Proton donor/acceptor. Tryptophan 152 contributes to the dTDP-beta-L-rhamnose binding site.

Belongs to the dTDP-4-dehydrorhamnose reductase family. As to quaternary structure, homodimer. Mg(2+) serves as cofactor.

It catalyses the reaction dTDP-beta-L-rhamnose + NADP(+) = dTDP-4-dehydro-beta-L-rhamnose + NADPH + H(+). It participates in carbohydrate biosynthesis; dTDP-L-rhamnose biosynthesis. It functions in the pathway bacterial outer membrane biogenesis; LPS O-antigen biosynthesis. In terms of biological role, involved in the biosynthesis of the dTDP-L-rhamnose which is an important component of lipopolysaccharide (LPS). Catalyzes the reduction of dTDP-6-deoxy-L-lyxo-4-hexulose to yield dTDP-L-rhamnose. This Aggregatibacter actinomycetemcomitans (Actinobacillus actinomycetemcomitans) protein is dTDP-4-dehydrorhamnose reductase.